The sequence spans 72 residues: Exodeoxyribonuclease 7 small subunit (72 aa).

Belongs to the XseB family. As to quaternary structure, heterooligomer composed of large and small subunits.

The protein resides in the cytoplasm. The catalysed reaction is Exonucleolytic cleavage in either 5'- to 3'- or 3'- to 5'-direction to yield nucleoside 5'-phosphates.. In terms of biological role, bidirectionally degrades single-stranded DNA into large acid-insoluble oligonucleotides, which are then degraded further into small acid-soluble oligonucleotides. This chain is Exodeoxyribonuclease 7 small subunit, found in Chlamydia muridarum (strain MoPn / Nigg).